The chain runs to 197 residues: MFGCLVAGRLVQTAAQQVAEDKFVFDLPDYESINHVVVFMLGTIPFPEGMGGSVYFSYPDSNGMPVWQLLGFVTNGKPSAIFKISGLKSGEGSQHPFGAMNIVRTPSVAQIGISVELLDSMAQQTPVGNAAVSSVDSFTQFTQKMLDNFYNFASSFAVSQAQMTPSPSEMFIPANVVLKWYENFQRRLAQNPLFWKT.

The segment at 18 to 55 (VAEDKFVFDLPDYESINHVVVFMLGTIPFPEGMGGSVY) is required for F-X-F-G repeats-nucleoporins recognition and nuclear import. The tract at residues 124–134 (QTPVGNAAVSS) is flexible linker region involved in nuclear import of HSP70 proteins.

It belongs to the OPI10 family. As to quaternary structure, forms an asymmetric homodimer; required for binding and nuclear import of HSP70 proteins. Interacts with ATP-bound HSP70 proteins. Interacts with NUP62 and NUP153 (via F-X-F-G repeats). Interacts with HSPA8.

The protein localises to the cytoplasm. The protein resides in the cytosol. It localises to the nucleus. In terms of biological role, acts as a specific nuclear import carrier for HSP70 proteins following heat-shock stress: acts by mediating the nucleoporin-dependent translocation of ATP-bound HSP70 proteins into the nucleus. HSP70 proteins import is required to protect cells from heat shock damages. Does not translocate ADP-bound HSP70 proteins into the nucleus. The chain is Protein Hikeshi from Homo sapiens (Human).